The primary structure comprises 509 residues: Methionine--tRNA ligase (509 aa).

Positions 12–22 (YYPSGDLHLGH) match the 'HIGH' region motif. The short motif at 302–306 (KMSKS) is the 'KMSKS' region element. K305 contacts ATP.

It belongs to the class-I aminoacyl-tRNA synthetase family. MetG type 2B subfamily. In terms of assembly, monomer.

It is found in the cytoplasm. It carries out the reaction tRNA(Met) + L-methionine + ATP = L-methionyl-tRNA(Met) + AMP + diphosphate. Functionally, is required not only for elongation of protein synthesis but also for the initiation of all mRNA translation through initiator tRNA(fMet) aminoacylation. This is Methionine--tRNA ligase (metG) from Mycoplasmopsis pulmonis (strain UAB CTIP) (Mycoplasma pulmonis).